The primary structure comprises 163 residues: UPF0262 protein RPE_4483 (163 aa).

Belongs to the UPF0262 family.

The protein is UPF0262 protein RPE_4483 of Rhodopseudomonas palustris (strain BisA53).